The sequence spans 154 residues: uncharacterized protein (154 aa).

The interval P91 to A154 is disordered. Residues S134–A154 show a composition bias toward polar residues.

This is an uncharacterized protein from Homo sapiens (Human).